The following is a 362-amino-acid chain: S-adenosylmethionine:tRNA ribosyltransferase-isomerase (362 aa).

The protein belongs to the QueA family. In terms of assembly, monomer.

The protein resides in the cytoplasm. It catalyses the reaction 7-aminomethyl-7-carbaguanosine(34) in tRNA + S-adenosyl-L-methionine = epoxyqueuosine(34) in tRNA + adenine + L-methionine + 2 H(+). It functions in the pathway tRNA modification; tRNA-queuosine biosynthesis. Its function is as follows. Transfers and isomerizes the ribose moiety from AdoMet to the 7-aminomethyl group of 7-deazaguanine (preQ1-tRNA) to give epoxyqueuosine (oQ-tRNA). The protein is S-adenosylmethionine:tRNA ribosyltransferase-isomerase of Yersinia enterocolitica serotype O:8 / biotype 1B (strain NCTC 13174 / 8081).